The following is an 88-amino-acid chain: Arminin 1a (88 aa).

The N-terminal stretch at 1–18 (MKTVLAFLFLPFIAFTHA) is a signal peptide. The propeptide occupies 19-57 (ESYEDVKEEIKNEAEKEIFEDLEEESDALDSSVREFNDA). Val-85 is subject to Valine amide.

This sequence belongs to the arminin family. As to expression, expressed in entodermal epithelium along the body column.

The protein resides in the secreted. The protein localises to the target cell membrane. Antimicrobial peptide with a broad-spectrum antimicrobial activity. Shows very strong bactericidal activity against B.megaterium (MBC=0.1 uM), E.coli (MBC=0.2 uM), S.aureus (MBC=0.4 uM), methicillin-resistant S.aureus (MRSA) (MBC=0.4-0.8 uM), vancomycin-resistant enterococci (VRE) (E.faecalis (MBC=1.6 uM), and E.faecium (MBC=0.4-0.8 uM)), and extended-spectrum beta-lactamase (ESBL)-producing enterobacteriaceae strains (K.pneumoniae (MBC=0.4-0.8 uM), E.coli (MBC=0.2-0.4 uM)). Keeps its antibacterial activity under a wide range of salt concentrations that mimic physiological conditions of human blood, which is surprising, since Hydra is an obligate freshwater animal with nearly no salt tolerance. Does not affect red blood cells. The chain is Arminin 1a from Hydra vulgaris (Hydra).